Consider the following 302-residue polypeptide: Putative gluconeogenesis factor (302 aa).

The protein belongs to the gluconeogenesis factor family.

It is found in the cytoplasm. Its function is as follows. Required for morphogenesis under gluconeogenic growth conditions. This is Putative gluconeogenesis factor (ybhK) from Escherichia coli O157:H7.